The primary structure comprises 807 residues: Hyaluronate lyase (807 aa).

An N-terminal signal peptide occupies residues 1–40; that stretch reads MTYRIKKWQKLSTITLLMAGVITLNGGEFRSVDKHQIAVA. Residues Asn-241, His-297, and Tyr-306 contribute to the active site.

It belongs to the polysaccharide lyase 8 family.

It localises to the secreted. The catalysed reaction is [hyaluronan](n) = n 3-(4-deoxy-beta-D-gluc-4-enuronosyl)-N-acetyl-D-glucosamine + H2O. This chain is Hyaluronate lyase, found in Staphylococcus aureus (strain NCTC 8325 / PS 47).